The chain runs to 614 residues: Zinc metalloproteinase-disintegrin-like Eoc1 (614 aa).

The first 19 residues, 1–19, serve as a signal peptide directing secretion; it reads MQVLLITISLAVLPYLGSS. A propeptide spanning residues 20 to 193 is cleaved from the precursor; the sequence is IILESGIVND…KASQLNLTPE (174 aa). Residue Gln194 is modified to Pyrrolidone carboxylic acid. The Peptidase M12B domain occupies 202–398; that stretch reads KHIKVAIVAD…KMPQCILIKP (197 aa). N-linked (GlcNAc...) asparagine glycosylation is present at Asn268. Intrachain disulfides connect Cys313–Cys393, Cys353–Cys377, and Cys355–Cys360. Residue His338 coordinates Zn(2+). Residue Glu339 is part of the active site. Residues His342 and His348 each contribute to the Zn(2+) site. Residue Asn376 is glycosylated (N-linked (GlcNAc...) asparagine). The region spanning 406–492 is the Disintegrin domain; that stretch reads PPVCGNSLVE…ECPADQFQRN (87 aa). Residues Val408, Asn411, Leu413, Glu415, Glu418, and Asp421 each coordinate Ca(2+). Cystine bridges form between Cys409-Cys438, Cys420-Cys433, Cys422-Cys428, Cys432-Cys455, Cys446-Cys452, Cys451-Cys477, Cys464-Cys484, Cys471-Cys503, Cys496-Cys508, Cys515-Cys565, Cys530-Cys576, Cys543-Cys553, Cys560-Cys602, and Cys596-Cys607. The short motif at 470–472 is the D/ECD-tripeptide element; the sequence is ECD. An N-linked (GlcNAc...) asparagine glycan is attached at Asn498.

Belongs to the venom metalloproteinase (M12B) family. P-III subfamily. P-IIIc sub-subfamily. In terms of assembly, heterodimer; disulfide-linked. It depends on Zn(2+) as a cofactor. Expressed by the venom gland.

The protein localises to the secreted. In terms of biological role, this metalloproteinase hydrolyzes azocasein, and oxidized insulin B-chain. Also hydrolyzes the alpha-chain (FGA) and more slowly the beta-chain of fibrinogen (FGB), without affecting the gamma-chain. Does not cleave fibrin. Inhibits endothelial cell adhesion to extracellular matrix proteins such as fibrinogen, fibronectin, vitronectin, collagen I, and collagen IV. Induces apoptosis in vascular endothelial cells. This Echis ocellatus (Ocellated saw-scaled viper) protein is Zinc metalloproteinase-disintegrin-like Eoc1 (Svmp3-Eoc1).